The primary structure comprises 240 residues: UDP-2,3-diacylglucosamine hydrolase (240 aa).

Mn(2+)-binding residues include Asp8, His10, Asp41, Asn79, and His114. A substrate-binding site is contributed by 79 to 80; that stretch reads NR. Substrate is bound by residues Asp122, Ser160, Asn164, Lys167, and His195. His195 and His197 together coordinate Mn(2+).

Belongs to the LpxH family. It depends on Mn(2+) as a cofactor.

Its subcellular location is the cell inner membrane. It catalyses the reaction UDP-2-N,3-O-bis[(3R)-3-hydroxytetradecanoyl]-alpha-D-glucosamine + H2O = 2-N,3-O-bis[(3R)-3-hydroxytetradecanoyl]-alpha-D-glucosaminyl 1-phosphate + UMP + 2 H(+). Its pathway is glycolipid biosynthesis; lipid IV(A) biosynthesis; lipid IV(A) from (3R)-3-hydroxytetradecanoyl-[acyl-carrier-protein] and UDP-N-acetyl-alpha-D-glucosamine: step 4/6. Functionally, hydrolyzes the pyrophosphate bond of UDP-2,3-diacylglucosamine to yield 2,3-diacylglucosamine 1-phosphate (lipid X) and UMP by catalyzing the attack of water at the alpha-P atom. Involved in the biosynthesis of lipid A, a phosphorylated glycolipid that anchors the lipopolysaccharide to the outer membrane of the cell. This is UDP-2,3-diacylglucosamine hydrolase from Yersinia pestis bv. Antiqua (strain Angola).